A 492-amino-acid polypeptide reads, in one-letter code: Peptidyl-prolyl cis-trans isomerase-like 4 (492 aa).

Positions 1 to 161 constitute a PPIase cyclophilin-type domain; it reads MAVLLETTLG…QDIRINHTVI (161 aa). Residues 167-188 form a disordered region; it reads DDPPDLLIPDRSPEPTKEQLDS. Over residues 177–187 the composition is skewed to basic and acidic residues; sequence RSPEPTKEQLD. A Phosphoserine modification is found at serine 178. Phosphothreonine is present on threonine 182. Residues lysine 201, lysine 212, and lysine 218 each participate in a glycyl lysine isopeptide (Lys-Gly) (interchain with G-Cter in SUMO2) cross-link. One can recognise an RRM domain in the interval 240–318; the sequence is NVLFVCKLNP…RRIHVDFSQS (79 aa). Residues lysine 321 and lysine 362 each participate in a glycyl lysine isopeptide (Lys-Gly) (interchain with G-Cter in SUMO2) cross-link. Disordered regions lie at residues 368–409 and 423–492; these read DEQG…NPNQ and EESC…SKYR. The span at 377–390 shows a compositional bias: basic residues; that stretch reads SHSHTSKKHKKKTR. Serine 393 bears the Phosphoserine mark. Residue lysine 405 forms a Glycyl lysine isopeptide (Lys-Gly) (interchain with G-Cter in SUMO2) linkage. Residues 426-436 show a composition bias toward basic and acidic residues; the sequence is CWEKQKNEKRD. Residue lysine 460 forms a Glycyl lysine isopeptide (Lys-Gly) (interchain with G-Cter in SUMO2) linkage. The residue at position 471 (serine 471) is a Phosphoserine. A compositionally biased stretch (basic residues) spans 473–485; that stretch reads KRDRSRSPKKSKA.

The protein belongs to the cyclophilin-type PPIase family. PPIL4 subfamily.

It is found in the nucleus. The enzyme catalyses [protein]-peptidylproline (omega=180) = [protein]-peptidylproline (omega=0). Its function is as follows. PPIases accelerate the folding of proteins. It catalyzes the cis-trans isomerization of proline imidic peptide bonds in oligopeptides. This is Peptidyl-prolyl cis-trans isomerase-like 4 (Ppil4) from Mus musculus (Mouse).